The chain runs to 270 residues: Protoheme IX farnesyltransferase (270 aa).

7 helical membrane passes run 13–30, 33–53, 95–115, 129–149, 156–176, 207–227, and 249–269; these read LALL…LVPD, HATL…GSAL, LLVL…ALAW, LALA…WTLA, YRII…FWLF, LWLG…LMAP, and EATL…ALLL.

Belongs to the UbiA prenyltransferase family. Protoheme IX farnesyltransferase subfamily.

The protein localises to the cell inner membrane. It carries out the reaction heme b + (2E,6E)-farnesyl diphosphate + H2O = Fe(II)-heme o + diphosphate. It participates in porphyrin-containing compound metabolism; heme O biosynthesis; heme O from protoheme: step 1/1. Converts heme B (protoheme IX) to heme O by substitution of the vinyl group on carbon 2 of heme B porphyrin ring with a hydroxyethyl farnesyl side group. The chain is Protoheme IX farnesyltransferase from Geobacter sulfurreducens (strain ATCC 51573 / DSM 12127 / PCA).